The chain runs to 358 residues: Vesicular integral-membrane protein VIP36 (358 aa).

Positions 1–46 (MAAEAWLWRWGWGWGQRCPGRPGLPGPGPSPTTFLHLLLLLGPVAA) are cleaved as a signal peptide. Residues 47–324 (DITDGNSEHL…FRNGPLTGWR (278 aa)) lie on the Lumenal side of the membrane. In terms of domain architecture, L-type lectin-like spans 54 to 278 (EHLKREHSLI…DIISIKLFQL (225 aa)). A carbohydrate contacts are provided by Ser98 and Asp133. Positions 164, 166, and 168 each coordinate Ca(2+). 166 to 168 (YPN) contributes to the a carbohydrate binding site. A glycan (N-linked (GlcNAc...) asparagine) is linked at Asn185. A carbohydrate is bound at residue His192. Residue Asp195 coordinates Ca(2+). Cys204 and Cys241 are joined by a disulfide. Residue 262 to 264 (GDL) coordinates a carbohydrate. A helical transmembrane segment spans residues 325–347 (VFLLLLCALLGVVVCAVVGAVVF). Residues 348-358 (QKRQERNKRFY) are Cytoplasmic-facing.

It depends on Ca(2+) as a cofactor.

It localises to the golgi apparatus membrane. In terms of biological role, plays a role as an intracellular lectin in the early secretory pathway. Interacts with N-acetyl-D-galactosamine and high-mannose type glycans and may also bind to O-linked glycans. Involved in the transport and sorting of glycoproteins carrying high mannose-type glycans. The protein is Vesicular integral-membrane protein VIP36 (Lman2) of Mus musculus (Mouse).